The following is a 413-amino-acid chain: Multifunctional CCA protein (413 aa).

ATP contacts are provided by Gly8 and Arg11. CTP contacts are provided by Gly8 and Arg11. 2 residues coordinate Mg(2+): Asp21 and Asp23. ATP is bound by residues Arg91, Arg143, and Arg146. Residues Arg91, Arg143, and Arg146 each coordinate CTP. The 102-residue stretch at 232 to 333 (TGVHVMMVID…VRLLERADAL (102 aa)) folds into the HD domain.

The protein belongs to the tRNA nucleotidyltransferase/poly(A) polymerase family. Bacterial CCA-adding enzyme type 1 subfamily. As to quaternary structure, monomer. Can also form homodimers and oligomers. Mg(2+) is required as a cofactor. Ni(2+) serves as cofactor.

It catalyses the reaction a tRNA precursor + 2 CTP + ATP = a tRNA with a 3' CCA end + 3 diphosphate. The catalysed reaction is a tRNA with a 3' CCA end + 2 CTP + ATP = a tRNA with a 3' CCACCA end + 3 diphosphate. Functionally, catalyzes the addition and repair of the essential 3'-terminal CCA sequence in tRNAs without using a nucleic acid template. Adds these three nucleotides in the order of C, C, and A to the tRNA nucleotide-73, using CTP and ATP as substrates and producing inorganic pyrophosphate. tRNA 3'-terminal CCA addition is required both for tRNA processing and repair. Also involved in tRNA surveillance by mediating tandem CCA addition to generate a CCACCA at the 3' terminus of unstable tRNAs. While stable tRNAs receive only 3'-terminal CCA, unstable tRNAs are marked with CCACCA and rapidly degraded. The sequence is that of Multifunctional CCA protein from Burkholderia pseudomallei (strain K96243).